A 224-amino-acid polypeptide reads, in one-letter code: UPF0758 protein Tola_0183 (224 aa).

The 123-residue stretch at 102–224 folds into the MPN domain; the sequence is SLTSPQLVRR…PVSFAERGWL (123 aa). Zn(2+) is bound by residues His173, His175, and Asp186. The JAMM motif signature appears at 173-186; that stretch reads HNHPSGVAEPSHAD.

The protein belongs to the UPF0758 family.

The sequence is that of UPF0758 protein Tola_0183 from Tolumonas auensis (strain DSM 9187 / NBRC 110442 / TA 4).